A 61-amino-acid chain; its full sequence is Large ribosomal subunit protein uL30 (61 aa).

It belongs to the universal ribosomal protein uL30 family. Part of the 50S ribosomal subunit.

This Treponema pallidum subsp. pallidum (strain SS14) protein is Large ribosomal subunit protein uL30.